The primary structure comprises 363 residues: Caffeic acid 3-O-methyltransferase (363 aa).

130–136 (MNQDKVL) lines the substrate pocket. The substrate binding stretch occupies residues 162–180 (AFEYHGKDPRFNKVFNQGM). Positions 208, 231, 251, 252, and 265 each coordinate S-adenosyl-L-methionine. Catalysis depends on H269, which acts as the Proton acceptor.

It belongs to the class I-like SAM-binding methyltransferase superfamily. Cation-independent O-methyltransferase family. COMT subfamily. Homodimer.

The catalysed reaction is (E)-caffeate + S-adenosyl-L-methionine = (E)-ferulate + S-adenosyl-L-homocysteine + H(+). Its pathway is aromatic compound metabolism; phenylpropanoid biosynthesis. Catalyzes the conversion of caffeic acid to ferulic acid and of 5-hydroxyferulic acid to sinapic acid. The resulting products may subsequently be converted to the corresponding alcohols that are incorporated into lignins. This is Caffeic acid 3-O-methyltransferase (COMT1) from Catharanthus roseus (Madagascar periwinkle).